The sequence spans 34 residues: Photosystem II reaction center protein M (34 aa).

The helical transmembrane segment at 5–25 threads the bilayer; sequence ILAFIATALFILIPTSFLLII.

The protein belongs to the PsbM family. In terms of assembly, PSII is composed of 1 copy each of membrane proteins PsbA, PsbB, PsbC, PsbD, PsbE, PsbF, PsbH, PsbI, PsbJ, PsbK, PsbL, PsbM, PsbT, PsbX, PsbY, PsbZ, Psb30/Ycf12, at least 3 peripheral proteins of the oxygen-evolving complex and a large number of cofactors. It forms dimeric complexes. Detected in both etioplasts and green leaves; PSII is only assembled in green leaves.

Its subcellular location is the plastid. It localises to the chloroplast thylakoid membrane. Its function is as follows. One of the components of the core complex of photosystem II (PSII). PSII is a light-driven water:plastoquinone oxidoreductase that uses light energy to abstract electrons from H(2)O, generating O(2) and a proton gradient subsequently used for ATP formation. It consists of a core antenna complex that captures photons, and an electron transfer chain that converts photonic excitation into a charge separation. This subunit is found at the monomer-monomer interface. This is Photosystem II reaction center protein M from Hordeum vulgare (Barley).